The chain runs to 498 residues: ATP synthase subunit beta, chloroplastic (498 aa).

Gly-172 to Thr-179 provides a ligand contact to ATP.

It belongs to the ATPase alpha/beta chains family. In terms of assembly, F-type ATPases have 2 components, CF(1) - the catalytic core - and CF(0) - the membrane proton channel. CF(1) has five subunits: alpha(3), beta(3), gamma(1), delta(1), epsilon(1). CF(0) has four main subunits: a(1), b(1), b'(1) and c(9-12).

The protein localises to the plastid. It localises to the chloroplast thylakoid membrane. The catalysed reaction is ATP + H2O + 4 H(+)(in) = ADP + phosphate + 5 H(+)(out). Functionally, produces ATP from ADP in the presence of a proton gradient across the membrane. The catalytic sites are hosted primarily by the beta subunits. This chain is ATP synthase subunit beta, chloroplastic, found in Jasminum nudiflorum (Winter jasmine).